Reading from the N-terminus, the 31-residue chain is MSDIN-like toxin proprotein 8 (31 aa).

A propeptide spanning residues 1 to 10 is cleaved from the precursor; it reads MSDINTARLP. Positions 11 to 18 form a cross-link, cyclopeptide (Cys-Pro); the sequence is CIGFLGIP. A propeptide spanning residues 19 to 31 is cleaved from the precursor; the sequence is SVGDDIEMVLRHG.

Belongs to the MSDIN fungal toxin family. Post-translationally, processed by the macrocyclase-peptidase enzyme POPB to yield a toxic cyclic octapeptide. POPB first removes 10 residues from the N-terminus. Conformational trapping of the remaining peptide forces the enzyme to release this intermediate rather than proceed to macrocyclization. The enzyme rebinds the remaining peptide in a different conformation and catalyzes macrocyclization of the N-terminal 8 residues.

Its function is as follows. Probable toxin that belongs to the MSDIN-like toxin family responsible for a large number of food poisoning cases and deaths. In Amanita bisporigera (Destroying angel), this protein is MSDIN-like toxin proprotein 8.